The following is a 95-amino-acid chain: Aspartyl/glutamyl-tRNA(Asn/Gln) amidotransferase subunit C (95 aa).

The protein belongs to the GatC family. In terms of assembly, heterotrimer of A, B and C subunits.

It catalyses the reaction L-glutamyl-tRNA(Gln) + L-glutamine + ATP + H2O = L-glutaminyl-tRNA(Gln) + L-glutamate + ADP + phosphate + H(+). The catalysed reaction is L-aspartyl-tRNA(Asn) + L-glutamine + ATP + H2O = L-asparaginyl-tRNA(Asn) + L-glutamate + ADP + phosphate + 2 H(+). Allows the formation of correctly charged Asn-tRNA(Asn) or Gln-tRNA(Gln) through the transamidation of misacylated Asp-tRNA(Asn) or Glu-tRNA(Gln) in organisms which lack either or both of asparaginyl-tRNA or glutaminyl-tRNA synthetases. The reaction takes place in the presence of glutamine and ATP through an activated phospho-Asp-tRNA(Asn) or phospho-Glu-tRNA(Gln). In Campylobacter concisus (strain 13826), this protein is Aspartyl/glutamyl-tRNA(Asn/Gln) amidotransferase subunit C.